The chain runs to 60 residues: Large ribosomal subunit protein bL32 (60 aa).

A compositionally biased stretch (basic residues) spans 1-23 (MAKHPVPKKKTSKSKRDMRRSHH). A disordered region spans residues 1-26 (MAKHPVPKKKTSKSKRDMRRSHHALV).

The protein belongs to the bacterial ribosomal protein bL32 family.

The protein is Large ribosomal subunit protein bL32 of Deinococcus geothermalis (strain DSM 11300 / CIP 105573 / AG-3a).